Here is a 142-residue protein sequence, read N- to C-terminus: Small ribosomal subunit protein uS12 (142 aa).

The protein belongs to the universal ribosomal protein uS12 family. In terms of assembly, part of the 30S ribosomal subunit.

Its function is as follows. With S4 and S5 plays an important role in translational accuracy. Located at the interface of the 30S and 50S subunits. This chain is Small ribosomal subunit protein uS12, found in Methanocorpusculum labreanum (strain ATCC 43576 / DSM 4855 / Z).